A 194-amino-acid chain; its full sequence is FK506-binding protein 3 (194 aa).

Positions 1-19 (MNKFLIALLVLATLAVSFS) are cleaved as a signal peptide. One can recognise a PPIase FKBP-type domain in the interval 44–133 (GDYISLKYVG…YFDLEVVSIE (90 aa)). Residues 148 to 168 (VGTIIAFSMLAGFIVLVKFII) form a helical membrane-spanning segment. The disordered stretch occupies residues 173-194 (DESNSKKPAPGKPKKTKAAKQN). The segment covering 184 to 194 (KPKKTKAAKQN) has biased composition (basic residues).

Belongs to the FKBP-type PPIase family.

Its subcellular location is the membrane. The catalysed reaction is [protein]-peptidylproline (omega=180) = [protein]-peptidylproline (omega=0). With respect to regulation, inhibited by both FK506 and rapamycin. In terms of biological role, PPIases accelerate the folding of proteins by catalyzing the cis-trans isomerization of proline imidic peptide bonds in oligopeptides. The protein is FK506-binding protein 3 (fkbp3) of Dictyostelium discoideum (Social amoeba).